Consider the following 525-residue polypeptide: MAVWHSANGKVYLPPSTPVARVQSTDEYIQRTNIYYHAFSDRLLTVGHPYFNVYNITGDKLEVPKVSGNQHRVFRLKLPDPNRFALADMSVYNPDKERLVWACRGLEIGRGQPLGVGSTGHPYFNKVKDTENSNAYITFSKDGQNTAFSKDDRLNTSFDPKQIQMFIVGCTPCIGEHWDKAVPCAKNDQQTGLCPPIELKNTYIEDGDMADIGFGNMNFKALQDSRSDVSLDIVNETCKYPDFLKMQNDIYGDACFFYARREQCYARHFFVRGGKTGDDIPGAQIDNGTYKNQFYIPGADGQAQKTIGNAMYFPTVSGSLVSSDAQLFNRPFWLQRAQGHNNGILWANQMFITVVDNTRNTNFSISVYNQAGPLKDVADYNAEQFREYQRHVEEYEISLILQLCKVPLKAEVLAQINAMNSSLLEDWQLGFVPTPDNPIQDTYRYIDSLATRCPDKNPPKEKEDPYKGLHFWDVDLTERLSLDLDQYSLGRKFLFQAGLQHTTVNGTKAVSYKGSNRGTKRKRKN.

Belongs to the papillomaviridae L1 protein family. In terms of assembly, self-assembles into homopentamers. The capsid has an icosahedral symmetry and consists of 72 capsomers, with each capsomer being a pentamer of L1. Interacts with the minor capsid protein L2; this interaction is necessary for viral genome encapsidation. Interacts with protein E2; this interaction enhances E2-dependent replication and transcription activation.

It localises to the virion. The protein localises to the host nucleus. In terms of biological role, forms an icosahedral capsid with a T=7 symmetry and a 50 nm diameter. The capsid is composed of 72 pentamers linked to each other by disulfide bonds and associated with L2 proteins. Binds to heparan sulfate proteoglycans on cell surface of basal layer keratinocytes to provide initial virion attachment. This binding mediates a conformational change in the virus capsid that facilitates efficient infection. The virion enters the host cell via endocytosis. During virus trafficking, L1 protein dissociates from the viral DNA and the genomic DNA is released to the host nucleus. The virion assembly takes place within the cell nucleus. Encapsulates the genomic DNA together with protein L2. This Human papillomavirus type 5b protein is Major capsid protein L1.